The following is a 429-amino-acid chain: TNF receptor-associated factor family protein DDB_G0267744 (429 aa).

The RING-type; degenerate zinc finger occupies 22–60; it reads CVICSHLQVDIYQCVEGHFACKNCFLKMIELKKQCMTCR. 2 consecutive TRAF-type zinc fingers follow at residues 151–203 and 204–265; these read HHLK…GEFN and NHQD…SNSE.

Belongs to the TNF receptor-associated factor family.

It localises to the cytoplasm. Its function is as follows. Probable adapter protein and signal transducer that links members of the tumor necrosis factor receptor family to different signaling pathways by association with the receptor cytoplasmic domain and kinases. This is TNF receptor-associated factor family protein DDB_G0267744 from Dictyostelium discoideum (Social amoeba).